A 121-amino-acid chain; its full sequence is Putative ankyrin repeat protein L215 (121 aa).

ANK repeat units follow at residues glutamine 10–glutamate 40 and isoleucine 42–valine 71.

This Acanthamoeba polyphaga mimivirus (APMV) protein is Putative ankyrin repeat protein L215.